The sequence spans 354 residues: Hyaluronan and proteoglycan link protein 1 (354 aa).

Residues Met1–Ala15 constitute a propeptide that is removed on maturation. Residues Asn21 and Asn56 are each glycosylated (N-linked (GlcNAc...) asparagine). In terms of domain architecture, Ig-like V-type spans Pro38–Val152. Intrachain disulfides connect Cys61–Cys139, Cys181–Cys252, Cys205–Cys226, Cys279–Cys349, and Cys304–Cys325. Link domains follow at residues Val159 to Thr254 and Gly259 to Arg351.

It belongs to the HAPLN family.

It localises to the secreted. It is found in the extracellular space. The protein localises to the extracellular matrix. Its function is as follows. Stabilizes the aggregates of proteoglycan monomers with hyaluronic acid in the extracellular cartilage matrix. The sequence is that of Hyaluronan and proteoglycan link protein 1 (HAPLN1) from Bos taurus (Bovine).